A 485-amino-acid polypeptide reads, in one-letter code: Glutamyl-tRNA(Gln) amidotransferase subunit A (485 aa).

Active-site charge relay system residues include Lys-79 and Ser-154. The Acyl-ester intermediate role is filled by Ser-178.

It belongs to the amidase family. GatA subfamily. In terms of assembly, heterotrimer of A, B and C subunits.

The enzyme catalyses L-glutamyl-tRNA(Gln) + L-glutamine + ATP + H2O = L-glutaminyl-tRNA(Gln) + L-glutamate + ADP + phosphate + H(+). Its function is as follows. Allows the formation of correctly charged Gln-tRNA(Gln) through the transamidation of misacylated Glu-tRNA(Gln) in organisms which lack glutaminyl-tRNA synthetase. The reaction takes place in the presence of glutamine and ATP through an activated gamma-phospho-Glu-tRNA(Gln). This is Glutamyl-tRNA(Gln) amidotransferase subunit A from Staphylococcus carnosus (strain TM300).